Here is a 348-residue protein sequence, read N- to C-terminus: Alcohol dehydrogenase 1 (348 aa).

An N-acetylserine modification is found at Ser-2. Cys-44 contributes to the Zn(2+) binding site. NAD(+) is bound by residues His-45, Thr-46, and His-49. Zn(2+) contacts are provided by His-67, Glu-68, Cys-98, Cys-101, Cys-104, Cys-112, and Cys-154. The NAD(+) site is built by Gly-181, Gly-182, Leu-183, Asp-202, and Lys-207. Position 213 is a phosphoserine (Ser-213). Phe-222 is an NAD(+) binding site. A Phosphothreonine modification is found at Thr-223. Glycyl lysine isopeptide (Lys-Gly) (interchain with G-Cter in ubiquitin) cross-links involve residues Lys-226 and Lys-234. NAD(+) contacts are provided by Val-269 and Met-271. The residue at position 279 (Ser-279) is a Phosphoserine. Residue Lys-287 forms a Glycyl lysine isopeptide (Lys-Gly) (interchain with G-Cter in ubiquitin) linkage. The NAD(+) site is built by Ser-294 and Val-296. At Ser-316 the chain carries Phosphoserine. Residue Lys-319 forms a Glycyl lysine isopeptide (Lys-Gly) (interchain with G-Cter in ubiquitin) linkage. Arg-341 contributes to the NAD(+) binding site.

The protein belongs to the zinc-containing alcohol dehydrogenase family. As to quaternary structure, homotetramer. Zn(2+) is required as a cofactor.

The protein resides in the cytoplasm. It carries out the reaction a primary alcohol + NAD(+) = an aldehyde + NADH + H(+). The enzyme catalyses a secondary alcohol + NAD(+) = a ketone + NADH + H(+). The catalysed reaction is ethanol + NAD(+) = acetaldehyde + NADH + H(+). It catalyses the reaction allyl alcohol + NADP(+) = acrolein + NADPH + H(+). It carries out the reaction 1-propanol + NAD(+) = propanal + NADH + H(+). The enzyme catalyses butan-1-ol + NAD(+) = butanal + NADH + H(+). The catalysed reaction is hexan-1-ol + NAD(+) = hexanal + NADH + H(+). It catalyses the reaction (R)-lactaldehyde + NAD(+) = methylglyoxal + NADH + H(+). It carries out the reaction octan-1-ol + NAD(+) = octanal + NADH + H(+). The enzyme catalyses butan-2-ol + NAD(+) = butan-2-one + NADH + H(+). The catalysed reaction is propan-2-ol + NAD(+) = acetone + NADH + H(+). It catalyses the reaction isobutanol + NAD(+) = 2-methylpropanal + NADH + H(+). In terms of biological role, preferentially fermentative isozyme that reduces acetaldehyde to ethanol during the fermentation of glucose. Major enzyme required for the conversion of acetaldehyde to ethanol. Plays a key role in the carbohydrate metabolism through the regeneration of NAD(+) from glycolytic NADH. In the reverse reaction, preferentially catalyzes the conversion of primary unbranched alcohols to their corresponding aldehydes. Also shows activity toward secondary alcohols. Most active with ethanol, and its activity decreases as the size of the alcohol is increased. The protein is Alcohol dehydrogenase 1 (ADH1) of Saccharomyces cerevisiae (strain ATCC 204508 / S288c) (Baker's yeast).